The chain runs to 513 residues: 2,3-bisphosphoglycerate-independent phosphoglycerate mutase (513 aa).

The Mn(2+) site is built by Asp13 and Ser63. Ser63 functions as the Phosphoserine intermediate in the catalytic mechanism. Substrate-binding positions include His124, Arg154–Asp155, Arg186, Arg192, Arg262–Arg265, and Lys335. The Mn(2+) site is built by Asp402, His406, Asp443, His444, and His462.

It belongs to the BPG-independent phosphoglycerate mutase family. In terms of assembly, monomer. It depends on Mn(2+) as a cofactor.

The catalysed reaction is (2R)-2-phosphoglycerate = (2R)-3-phosphoglycerate. It participates in carbohydrate degradation; glycolysis; pyruvate from D-glyceraldehyde 3-phosphate: step 3/5. Catalyzes the interconversion of 2-phosphoglycerate and 3-phosphoglycerate. In Shewanella frigidimarina (strain NCIMB 400), this protein is 2,3-bisphosphoglycerate-independent phosphoglycerate mutase.